Reading from the N-terminus, the 1117-residue chain is Cytospin-A (1117 aa).

3 disordered regions span residues 1 to 176 (MKKA…NQIS), 293 to 323 (SLSPEITPGNQSDGGGTLTSSVEGSAPGSVE), and 358 to 390 (SSDDALDAPSSSESEGIPSIERSRKGSSGNASE). The span at 45 to 90 (TAASLSKTKSSDDLLAGMAGGVTVTNGVKGKKSTCPSAAPSASAPA) shows a compositional bias: low complexity. Polar residues predominate over residues 93 to 117 (TVENKSKISTGTASSTKRNTSTGNK). Basic and acidic residues-rich tracts occupy residues 120-131 (SSTRERLRERTR) and 158-171 (TATECDVRMSKSKS). A coiled-coil region spans residues 168–280 (KSKSDNQISD…LNALGFSLEQ (113 aa)). A compositionally biased stretch (polar residues) spans 293–303 (SLSPEITPGNQ). A compositionally biased stretch (low complexity) spans 358–377 (SSDDALDAPSSSESEGIPSI). A phosphoserine mark is found at Ser384, Ser385, and Ser389. Coiled coils occupy residues 394 to 449 (ACLT…MESL) and 487 to 807 (RYME…RGRV). Phosphoserine is present on residues Ser868, Ser881, and Ser887. Residues 919–1001 (RTSSASRPAS…SRIREERKDP (83 aa)) form a disordered region. Positions 946 to 956 (RSSEEMKRDIS) are enriched in basic and acidic residues. Residues 971-990 (TTSPQLSLSSSPTASVTPTT) are compositionally biased toward low complexity. In terms of domain architecture, Calponin-homology (CH) spans 1011 to 1116 (GSKRNALLKW…YVTAIYKYFE (106 aa)).

Belongs to the cytospin-A family. In terms of assembly, may interact with both microtubules and actin cytoskeleton.

The protein resides in the cytoplasm. It localises to the cytoskeleton. It is found in the spindle. The protein localises to the cell junction. Its subcellular location is the gap junction. Functionally, involved in cytokinesis and spindle organization. May play a role in actin cytoskeleton organization and microtubule stabilization and hence required for proper cell adhesion and migration. This is Cytospin-A (SPECC1L) from Pan troglodytes (Chimpanzee).